The chain runs to 261 residues: Protein-ADP-ribose hydrolase (261 aa).

The Macro domain occupies 74-261 (ADLKPVTGRG…DEALYNKLMS (188 aa)). ADP-D-ribose contacts are provided by Asp-93, Ile-94, and Asn-107. The Zn(2+) site is built by Cys-113, His-118, and Cys-120. ADP-D-ribose-binding residues include Cys-120, Ile-121, Asp-122, Ser-211, Thr-212, Gly-213, and Phe-215.

It belongs to the MacroD-type family. Zn-Macro subfamily. Requires Zn(2+) as cofactor.

It catalyses the reaction 4-O-(ADP-D-ribosyl)-L-aspartyl-[protein] + H2O = L-aspartyl-[protein] + ADP-D-ribose + H(+). ADP-ribosylhydrolase that specifically reverses the SirTM-mediated mono-ADP-ribosylation at an asparatate residue of GcvH-L, by releasing ADP-ribose from the target protein. May play a role in the regulation of the response to host-induced oxidative stress. The chain is Protein-ADP-ribose hydrolase from Treponema medium.